Reading from the N-terminus, the 682-residue chain is Potassium-transporting ATPase ATP-binding subunit (682 aa).

4 consecutive transmembrane segments (helical) span residues Pro-34–Val-54, Ile-58–Phe-78, Ile-219–Leu-239, and Val-254–Ile-274. Asp-307 serves as the catalytic 4-aspartylphosphate intermediate. Residues Asp-344, Glu-348, Phe-377 to Ser-384, and Lys-395 each bind ATP. Residues Asp-518 and Asp-522 each contribute to the Mg(2+) site. Transmembrane regions (helical) follow at residues Phe-588–Met-608, Ala-616–Leu-636, and Leu-662–Ala-682.

This sequence belongs to the cation transport ATPase (P-type) (TC 3.A.3) family. Type IA subfamily. As to quaternary structure, the system is composed of three essential subunits: KdpA, KdpB and KdpC.

The protein resides in the cell inner membrane. It carries out the reaction K(+)(out) + ATP + H2O = K(+)(in) + ADP + phosphate + H(+). In terms of biological role, part of the high-affinity ATP-driven potassium transport (or Kdp) system, which catalyzes the hydrolysis of ATP coupled with the electrogenic transport of potassium into the cytoplasm. This subunit is responsible for energy coupling to the transport system and for the release of the potassium ions to the cytoplasm. The protein is Potassium-transporting ATPase ATP-binding subunit of Salmonella paratyphi A (strain ATCC 9150 / SARB42).